The sequence spans 309 residues: Olfactory receptor 10J5 (309 aa).

At 1–27 the chain is on the extracellular side; the sequence is MQRNNFTEVIEFVFLGFSSFGKHQITL. Residues 28 to 48 form a helical membrane-spanning segment; that stretch reads FVVFLTIYILTLAGNIIIVTI. Topologically, residues 49-57 are cytoplasmic; the sequence is THIDHHLHT. The helical transmembrane segment at 58–78 threads the bilayer; sequence PMYFFLSMLASSETVYTLVIV. Topologically, residues 79-84 are extracellular; it reads PRMLSS. Residues 85-105 form a helical membrane-spanning segment; that stretch reads LIFYNLPISLAGCATQMFFFV. Cys-97 and Cys-178 are oxidised to a cystine. The Cytoplasmic segment spans residues 106–131; that stretch reads TLATNNCFLLTAMGYDRYVAICNPLR. Residues 132–152 traverse the membrane as a helical segment; the sequence is YTIIMSKGMCALLVCGSLGTG. Residues 153–203 are Extracellular-facing; it reads LVMAVLHVPAMFHLPFCGTVVEHFFCDIYPVMKLSCVDTTVNEIINYGVSS. A helical transmembrane segment spans residues 204–224; sequence FVILVPIGLIFISYVLIVSSI. The Cytoplasmic segment spans residues 225–235; the sequence is LKIVSTEGQKK. Residues 236–256 traverse the membrane as a helical segment; that stretch reads AFATCASHLTVVIVHYGCASI. Topologically, residues 257-270 are extracellular; that stretch reads AYLKPKSESSVEKD. The chain crosses the membrane as a helical span at residues 271-291; the sequence is LLLSVTYTIITPLLNPVVYSL. Residues 292–309 lie on the Cytoplasmic side of the membrane; it reads RNKEVKDALCRAVGRNTS.

The protein belongs to the G-protein coupled receptor 1 family. As to expression, expressed in the olfactory epithelium as well as in the testis. Expressed in round spermatids during stages VI-VIII of spermatogenesis.

The protein localises to the cell membrane. Functionally, olfactory receptor. Activated by the synthetic floral odorant, lyral, and by alpha-cedrene, a sesquiterpene constituent of cedarwood oil. Its activation increases intracellular Ca(2+). Acts as a key regulator of myogenesis through its actions on cell migration and adhesion by activating the Ca(2+)-dependent AKT signal transduction pathway. Also acts as a regulator of angiogenesis. Moreover, plays a role in the regulation of lipid accumulation in hepatocytes via the cAMP-PKA pathway. Involved in sperm chemotaxis and motility. The polypeptide is Olfactory receptor 10J5 (Mus musculus (Mouse)).